Consider the following 177-residue polypeptide: Large ribosomal subunit protein uL6 (177 aa).

It belongs to the universal ribosomal protein uL6 family. In terms of assembly, part of the 50S ribosomal subunit.

Functionally, this protein binds to the 23S rRNA, and is important in its secondary structure. It is located near the subunit interface in the base of the L7/L12 stalk, and near the tRNA binding site of the peptidyltransferase center. The chain is Large ribosomal subunit protein uL6 from Enterobacter sp. (strain 638).